Here is a 569-residue protein sequence, read N- to C-terminus: Tetratricopeptide repeat protein 22 (569 aa).

7 TPR repeats span residues 66-99 (PAVR…HPGN), 101-133 (NAWA…MGLA), 203-237 (ATLY…LRQV), 260-294 (KDTF…AKNQ), 295-328 (PPIL…LRDP), 383-418 (FKAY…ALVF), and 432-465 (PELQ…DDAG).

The chain is Tetratricopeptide repeat protein 22 (TTC22) from Homo sapiens (Human).